Reading from the N-terminus, the 692-residue chain is 5-taurinomethyluridine-[tRNA] synthase subunit MTO1, mitochondrial (692 aa).

The transit peptide at 1–25 (MFYLRGCGRWVAASFTKQQFPLVRL) directs the protein to the mitochondrion. FAD-binding positions include 43–48 (GGGHAG), V155, S218, and Q407. K508 is subject to N6-methyllysine. The segment at 669–692 (AAMNESPKTDQCLRNADRLQERQL) is disordered. Basic and acidic residues predominate over residues 683–692 (NADRLQERQL).

The protein belongs to the MnmG family. Homodimer; forms a dimer in the presence of potassium. Interacts with GTPBP3; forms the GTPBP3-MTO1 complex composed of homodimers of GTPBP3 and MTO1. FAD serves as cofactor.

The protein resides in the mitochondrion. It catalyses the reaction 5,10-methylenetetrahydrofolate + uridine(34) in tRNA + taurine + GTP + A + H2O = 5-taurinomethyluridine(34) in tRNA + 7,8-dihydrofolate + GDP + AH2 + phosphate + H(+). Its function is as follows. Component of the GTPBP3-MTO1 complex that catalyzes the 5-taurinomethyluridine (taum(5)U) modification at the 34th wobble position (U34) of mitochondrial tRNAs (mt-tRNAs), which plays a role in mt-tRNA decoding and mitochondrial translation. Taum(5)U formation on mammalian mt-tRNA requires the presence of both GTPBP3-mediated GTPase activity and MTO1 catalytic activity. The protein is 5-taurinomethyluridine-[tRNA] synthase subunit MTO1, mitochondrial (MTO1) of Macaca fascicularis (Crab-eating macaque).